Here is a 252-residue protein sequence, read N- to C-terminus: MMLRVSSSPAAAVANHLSGGAAATTAPARVTAQRSGVSLSAAAAAGKGKEVLSGVVFQPFEEIKGELALVPQSPDRSLARHKFVDDCEAAINEQINVEYNASYAYHSLFAYFDRDNVALKGFAKFFKESSDEEREHAEKLMEYQNKRGGRVRLQSIVAPLTEFDHPEKGDALYAMELTLALEKLVNEKLHSLHGVATRCNDPQLIDFIESEFLEEQGEAINKVSKYVAQLRRVGNKGHGVWHFDQMLLQEAA.

The transit peptide at 1 to 43 directs the protein to the chloroplast; the sequence is MMLRVSSSPAAAVANHLSGGAAATTAPARVTAQRSGVSLSAAA. Residues 44-80 are extension peptide (EP); that stretch reads AAGKGKEVLSGVVFQPFEEIKGELALVPQSPDRSLAR. One can recognise a Ferritin-like diiron domain in the interval 81-234; that stretch reads HKFVDDCEAA…KYVAQLRRVG (154 aa). Residues glutamate 98, glutamate 133, histidine 136, glutamate 182, and glutamine 216 each contribute to the Fe cation site.

This sequence belongs to the ferritin family. Oligomer of 24 subunits. There are two types of subunits: L (light) chain and H (heavy) chain. The major chain can be light or heavy, depending on the species and tissue type. The functional molecule forms a roughly spherical shell with a diameter of 12 nm and contains a central cavity into which the insoluble mineral iron core is deposited. In terms of tissue distribution, ferritins accumulate in seed during maturation. Then, they are degraded during the first days of germination. Present in roots and leaves after iron treatment.

It is found in the plastid. Its subcellular location is the chloroplast. It carries out the reaction 4 Fe(2+) + O2 + 4 H(+) = 4 Fe(3+) + 2 H2O. In terms of biological role, stores iron in a soluble, non-toxic, readily available form. Important for iron homeostasis. Has ferroxidase activity. Iron is taken up in the ferrous form and deposited as ferric hydroxides after oxidation. The protein is Ferritin-2, chloroplastic (FER2) of Zea mays (Maize).